Reading from the N-terminus, the 158-residue chain is MNVVQGNIEAKNAKVAIVISRFNSFLVESLLEGALDTLKRFGQVSDENITVVRVPGAVELPLAARRVAASGKFDGIIALGAVIRGGTPHFDFVAGECNKGLAQIALEFDLPVAFGVLTTDTIEQAIERSGTKAGNKGGEAALSLLEMVNVLQQLEQQL.

Residues phenylalanine 22, 57 to 59 (AVE), and 81 to 83 (AVI) each bind 5-amino-6-(D-ribitylamino)uracil. Residue 86–87 (GT) coordinates (2S)-2-hydroxy-3-oxobutyl phosphate. Catalysis depends on histidine 89, which acts as the Proton donor. Position 114 (phenylalanine 114) interacts with 5-amino-6-(D-ribitylamino)uracil. Residue arginine 128 coordinates (2S)-2-hydroxy-3-oxobutyl phosphate.

The protein belongs to the DMRL synthase family. Forms an icosahedral capsid composed of 60 subunits, arranged as a dodecamer of pentamers.

The enzyme catalyses (2S)-2-hydroxy-3-oxobutyl phosphate + 5-amino-6-(D-ribitylamino)uracil = 6,7-dimethyl-8-(1-D-ribityl)lumazine + phosphate + 2 H2O + H(+). The protein operates within cofactor biosynthesis; riboflavin biosynthesis; riboflavin from 2-hydroxy-3-oxobutyl phosphate and 5-amino-6-(D-ribitylamino)uracil: step 1/2. Functionally, catalyzes the formation of 6,7-dimethyl-8-ribityllumazine by condensation of 5-amino-6-(D-ribitylamino)uracil with 3,4-dihydroxy-2-butanone 4-phosphate. This is the penultimate step in the biosynthesis of riboflavin. The polypeptide is 6,7-dimethyl-8-ribityllumazine synthase (Shewanella oneidensis (strain ATCC 700550 / JCM 31522 / CIP 106686 / LMG 19005 / NCIMB 14063 / MR-1)).